A 313-amino-acid polypeptide reads, in one-letter code: 4-diphosphocytidyl-2-C-methyl-D-erythritol kinase (313 aa).

Lysine 10 is a catalytic residue. 95–105 (PVTAGLGGGSS) is an ATP binding site. The active site involves aspartate 136. The segment at 289–313 (HPRVSPWRSPRSASSPSTRRSSRPT) is disordered. Low complexity predominate over residues 292 to 307 (VSPWRSPRSASSPSTR).

The protein belongs to the GHMP kinase family. IspE subfamily.

The catalysed reaction is 4-CDP-2-C-methyl-D-erythritol + ATP = 4-CDP-2-C-methyl-D-erythritol 2-phosphate + ADP + H(+). It participates in isoprenoid biosynthesis; isopentenyl diphosphate biosynthesis via DXP pathway; isopentenyl diphosphate from 1-deoxy-D-xylulose 5-phosphate: step 3/6. Functionally, catalyzes the phosphorylation of the position 2 hydroxy group of 4-diphosphocytidyl-2C-methyl-D-erythritol. This chain is 4-diphosphocytidyl-2-C-methyl-D-erythritol kinase, found in Anaeromyxobacter dehalogenans (strain 2CP-C).